The following is a 70-amino-acid chain: U2-agatoxin-Ao1l (70 aa).

The first 20 residues, 1-20 (MRAIISLLLISAMVFSIIEA), serve as a signal peptide directing secretion. Residues 21 to 34 (VPEEEGLQLSEDER) constitute a propeptide that is removed on maturation. Intrachain disulfides connect cysteine 37–cysteine 53, cysteine 44–cysteine 58, and cysteine 52–cysteine 68. Residue leucine 69 is modified to Leucine amide.

This sequence belongs to the neurotoxin 01 (U2-agtx) family. As to expression, expressed by the venom gland.

It is found in the secreted. Insect active toxin causing rapid but reversible paralysis in crickets. No activity shown in mammals. Does not show effect on mammalian voltage-gated calcium channels. The sequence is that of U2-agatoxin-Ao1l from Agelena orientalis (Funnel-web spider).